A 639-amino-acid polypeptide reads, in one-letter code: Synaptotagmin-16 (639 aa).

Residues 95 to 119 show a composition bias toward polar residues; the sequence is NSDLQDSVQTASPTLGQQAEDSSSV. A disordered region spans residues 95-191; that stretch reads NSDLQDSVQT…SSESDEDVTK (97 aa). Over residues 121 to 134 the composition is skewed to pro residues; the sequence is PPWPSKIPGAPKPQ. The span at 142–151 shows a compositional bias: basic and acidic residues; that stretch reads EEDHHSERQR. The segment covering 174–187 has biased composition (acidic residues); sequence GDDEEPSTSSESDE. Residues 344-463 form the C2 1 domain; sequence KCGDLDVIFE…HPEGEMKVTL (120 aa). The tract at residues 470-496 is disordered; it reads NLSSGESPLSPSVVSHSDSASSTQSLS. A compositionally biased stretch (low complexity) spans 476-496; it reads SPLSPSVVSHSDSASSTQSLS. The C2 2 domain occupies 499–634; it reads GVPELLVGLS…SKGQQTCRWH (136 aa).

It belongs to the synaptotagmin family. Homodimer. Can also form heterodimers. In terms of tissue distribution, highly expressed in heart and testis. Moderately expressed in kidney.

Its function is as follows. May be involved in the trafficking and exocytosis of secretory vesicles in non-neuronal tissues. Is Ca(2+)-independent. This chain is Synaptotagmin-16 (Syt16), found in Mus musculus (Mouse).